A 496-amino-acid polypeptide reads, in one-letter code: Protein RepS (496 aa).

Residues 120 to 141 mediate DNA binding; sequence SDILTTAIDLGFMPTLIIKSDK.

In terms of biological role, essential for replication. The polypeptide is Protein RepS (repS) (Streptococcus pyogenes).